Reading from the N-terminus, the 345-residue chain is MHKKDFHYELPDALIAQAPLPERSAARMLIVDGHQGTWEDAWVRDLPGVLRPGDLLVLNDTRVLPARLQARKTTGGAVELLLDRLLDARDGWFLAKSSKALRPGMSIHLPGGAVATVEEKDGMDVRLSLPADVAWLPILEAGGSMPLPPYIRRAAEASDRERYQTVYAARPGAVAAPTAGLHFDTELLDALAARGVERTFVTLHVGAGTFLPVRSEDITEHPMHAETMEVSATTVAAVAAARARGGRVIAVGTTACRALETAAQGGTLRPFTGETRLFLYPGKTFQVTDGLLTNFHLPESTLLMLVCAFAGMECMLAAYRHAVAEGYRFFSYGDAMLISPQAGRR.

This sequence belongs to the QueA family. Monomer.

It is found in the cytoplasm. It catalyses the reaction 7-aminomethyl-7-carbaguanosine(34) in tRNA + S-adenosyl-L-methionine = epoxyqueuosine(34) in tRNA + adenine + L-methionine + 2 H(+). It participates in tRNA modification; tRNA-queuosine biosynthesis. Transfers and isomerizes the ribose moiety from AdoMet to the 7-aminomethyl group of 7-deazaguanine (preQ1-tRNA) to give epoxyqueuosine (oQ-tRNA). The protein is S-adenosylmethionine:tRNA ribosyltransferase-isomerase of Acidithiobacillus ferrooxidans (strain ATCC 53993 / BNL-5-31) (Leptospirillum ferrooxidans (ATCC 53993)).